The sequence spans 215 residues: Pyrrolidone-carboxylate peptidase (215 aa).

Active-site residues include Glu-80, Cys-143, and His-167.

This sequence belongs to the peptidase C15 family. Homotetramer.

The protein resides in the cytoplasm. It catalyses the reaction Release of an N-terminal pyroglutamyl group from a polypeptide, the second amino acid generally not being Pro.. Its function is as follows. Removes 5-oxoproline from various penultimate amino acid residues except L-proline. This chain is Pyrrolidone-carboxylate peptidase, found in Bacillus cereus (strain AH820).